The sequence spans 346 residues: Queuosine 5'-phosphate N-glycosylase/hydrolase (346 aa).

The queuine site is built by H49, F243, D245, D310, and D315. The Nucleophile or transition state stabilizer role is filled by D245.

This sequence belongs to the QNG1 protein family.

It carries out the reaction queuosine 5'-phosphate + H2O = queuine + D-ribose 5-phosphate. Catalyzes the hydrolysis of queuosine 5'-phosphate, releasing the nucleobase queuine (q). Is required for salvage of queuine from exogenous queuosine (Q) that is imported and then converted to queuosine 5'-phosphate intracellularly. The protein is Queuosine 5'-phosphate N-glycosylase/hydrolase of Schizosaccharomyces pombe (strain 972 / ATCC 24843) (Fission yeast).